A 138-amino-acid polypeptide reads, in one-letter code: Nucleoside diphosphate kinase (138 aa).

ATP-binding residues include K9, F57, R85, T91, R102, and N112. The active-site Pros-phosphohistidine intermediate is H115.

Belongs to the NDK family. In terms of assembly, homotetramer. It depends on Mg(2+) as a cofactor.

It is found in the cytoplasm. The catalysed reaction is a 2'-deoxyribonucleoside 5'-diphosphate + ATP = a 2'-deoxyribonucleoside 5'-triphosphate + ADP. It catalyses the reaction a ribonucleoside 5'-diphosphate + ATP = a ribonucleoside 5'-triphosphate + ADP. Its function is as follows. Major role in the synthesis of nucleoside triphosphates other than ATP. The ATP gamma phosphate is transferred to the NDP beta phosphate via a ping-pong mechanism, using a phosphorylated active-site intermediate. The sequence is that of Nucleoside diphosphate kinase from Desulfatibacillum aliphaticivorans.